Reading from the N-terminus, the 393-residue chain is DNA-directed RNA polymerase subunit Rpo1C (393 aa).

Belongs to the RNA polymerase beta' chain family. Part of the 13-subunit RNA polymerase complex. Interacts with TFS4.

Its subcellular location is the cytoplasm. The catalysed reaction is RNA(n) + a ribonucleoside 5'-triphosphate = RNA(n+1) + diphosphate. Functionally, DNA-dependent RNA polymerase (RNAP) catalyzes the transcription of DNA into RNA using the four ribonucleoside triphosphates as substrates. Forms part of the jaw domain. In terms of biological role, reconstitution experiments show this subunit is required for basic activity. The chain is DNA-directed RNA polymerase subunit Rpo1C from Sulfolobus acidocaldarius (strain ATCC 33909 / DSM 639 / JCM 8929 / NBRC 15157 / NCIMB 11770).